The primary structure comprises 778 residues: Endonuclease MutS2 (778 aa).

Position 328–335 (328–335) interacts with ATP; sequence GPNTGGKT. The 76-residue stretch at 702-777 folds into the Smr domain; sequence LDLRGKRYEE…GSGATIVTFK (76 aa).

This sequence belongs to the DNA mismatch repair MutS family. MutS2 subfamily. Homodimer. Binds to stalled ribosomes, contacting rRNA.

In terms of biological role, endonuclease that is involved in the suppression of homologous recombination and thus may have a key role in the control of bacterial genetic diversity. Acts as a ribosome collision sensor, splitting the ribosome into its 2 subunits. Detects stalled/collided 70S ribosomes which it binds and splits by an ATP-hydrolysis driven conformational change. Acts upstream of the ribosome quality control system (RQC), a ribosome-associated complex that mediates the extraction of incompletely synthesized nascent chains from stalled ribosomes and their subsequent degradation. Probably generates substrates for RQC. The chain is Endonuclease MutS2 from Streptococcus pneumoniae (strain CGSP14).